The chain runs to 24 residues: Erythromycin resistance leader peptide (24 aa).

Low complexity predominate over residues 1–14; the sequence is MSMGIAARPPRAAL. A disordered region spans residues 1–24; sequence MSMGIAARPPRAALLPPPSVPRSR. Positions 15–24 are enriched in pro residues; it reads LPPPSVPRSR.

This peptide is involved in the control mechanism of the synthesis of the macrolide-lincosamide-streptogramin B resistance protein. The sequence is that of Erythromycin resistance leader peptide from Streptomyces fradiae (Streptomyces roseoflavus).